The primary structure comprises 494 residues: Metal cation symporter ZIP14 (494 aa).

The N-terminal stretch at 1-34 (MTLRRASGCRQLTLTIGLALTLGLLQWPIGDVRG) is a signal peptide. The Extracellular portion of the chain corresponds to 35–152 (QDGASPAQVL…PTEAEVWGYG (118 aa)). The helical transmembrane segment at 153–173 (LLCVTVISLCSLVGASVVPFM) threads the bilayer. Residues 174–181 (RKTFYKRL) are Cytoplasmic-facing. The helical transmembrane segment at 182–202 (LLYFIALAIGTLYSNALFQLI) threads the bilayer. Topologically, residues 203-219 (PEAFGFDPMEDYYVPKS) are extracellular. Residues 220–240 (AVVFGGFYLFFFTEKILKMIL) traverse the membrane as a helical segment. The Cytoplasmic segment spans residues 241–397 (KPKDTGGHGH…LLNAGMSIQQ (157 aa)). Positions 248–255 (HGHGHSHF) match the HHHGHXHX-motif motif. The XEXPHE-motif motif lies at 376–381 (EEFPHE). The helical transmembrane segment at 398 to 418 (ALFFNFLSACCCYLGMGFGIL) threads the bilayer. At 419–426 (AGNNFSPN) the chain is on the extracellular side. A helical membrane pass occupies residues 427–447 (WIFALAGGMFLYIALADMFPE). Residues 448–462 (MNEVSREEEEAGGSG) are Cytoplasmic-facing. A helical membrane pass occupies residues 463–483 (FLLTFALQNAGLLTGFAIMLV). The Extracellular portion of the chain corresponds to 484 to 494 (LTIYSGQIQLG).

The protein belongs to the ZIP transporter (TC 2.A.5) family. As to quaternary structure, homotrimer.

Its subcellular location is the cell membrane. The protein resides in the apical cell membrane. The protein localises to the basolateral cell membrane. It is found in the early endosome membrane. It localises to the late endosome membrane. Its subcellular location is the lysosome membrane. It carries out the reaction Zn(2+)(out) + 2 hydrogencarbonate(out) = Zn(2+)(in) + 2 hydrogencarbonate(in). The catalysed reaction is Mn(2+)(out) + 2 hydrogencarbonate(out) = Mn(2+)(in) + 2 hydrogencarbonate(in). It catalyses the reaction Fe(2+)(out) + 2 hydrogencarbonate(out) = Fe(2+)(in) + 2 hydrogencarbonate(in). The enzyme catalyses Cd(2+)(out) + 2 hydrogencarbonate(out) = Cd(2+)(in) + 2 hydrogencarbonate(in). Its function is as follows. Broad-scope metal ion transporter with a preference for zinc uptake. Also mediates cellular uptake of nontransferrin-bound iron. Functionally, electroneutral transporter of the plasma membrane mediating the cellular uptake of the divalent metal cations zinc, manganese and iron that are important for tissue homeostasis, metabolism, development and immunity. Functions as an energy-dependent symporter, transporting through the membranes an electroneutral complex composed of a divalent metal cation and two bicarbonate anions. Beside these endogenous cellular substrates, can also import cadmium a non-essential metal which is cytotoxic and carcinogenic. The chain is Metal cation symporter ZIP14 from Danio rerio (Zebrafish).